We begin with the raw amino-acid sequence, 146 residues long: Hemoglobin subunit beta (146 aa).

The residue at position 1 (Val1) is an N-acetylvaline. One can recognise a Globin domain in the interval 2–146 (HLTGEEKSAV…VATALAHKYH (145 aa)). Phosphothreonine is present on Thr12. Position 44 is a phosphoserine (Ser44). His63 lines the heme b pocket. N6-acetyllysine is present on Lys82. Position 92 (His92) interacts with heme b. Cys93 is subject to S-nitrosocysteine. Lys144 is subject to N6-acetyllysine.

Belongs to the globin family. In terms of assembly, heterotetramer of two alpha chains and two beta chains. Red blood cells.

Its function is as follows. Involved in oxygen transport from the lung to the various peripheral tissues. This chain is Hemoglobin subunit beta (HBB), found in Tursiops truncatus (Atlantic bottle-nosed dolphin).